We begin with the raw amino-acid sequence, 84 residues long: Anaphase-promoting complex subunit 11 (84 aa).

The Zn(2+) site is built by Cys23, Cys26, Cys34, Cys37, Cys44, Cys51, His53, His56, His58, Cys59, Cys73, and Cys76. The segment at 34-77 (CPDCKVPGDDCPLVWGQCSHCFHMHCILKWLNAQQVQQHCPMCR) adopts an RING-type zinc-finger fold.

Belongs to the RING-box family. The mammalian APC/C is composed at least of 14 distinct subunits ANAPC1, ANAPC2, CDC27/APC3, ANAPC4, ANAPC5, CDC16/APC6, ANAPC7, CDC23/APC8, ANAPC10, ANAPC11, CDC26/APC12, ANAPC13, ANAPC15 and ANAPC16 that assemble into a complex of at least 19 chains with a combined molecular mass of around 1.2 MDa; APC/C interacts with FZR1 and FBXO5. Interacts with the cullin domain of ANAPC2. Interacts with UBE2D2. Post-translationally, auto-ubiquitinated.

Its subcellular location is the cytoplasm. The protein resides in the nucleus. It functions in the pathway protein modification; protein ubiquitination. In terms of biological role, together with the cullin protein ANAPC2, constitutes the catalytic component of the anaphase promoting complex/cyclosome (APC/C), a cell cycle-regulated E3 ubiquitin ligase that controls progression through mitosis and the G1 phase of the cell cycle. The APC/C complex acts by mediating ubiquitination and subsequent degradation of target proteins: it mainly mediates the formation of 'Lys-11'-linked polyubiquitin chains and, to a lower extent, the formation of 'Lys-48'- and 'Lys-63'-linked polyubiquitin chains. The APC/C complex catalyzes assembly of branched 'Lys-11'-/'Lys-48'-linked branched ubiquitin chains on target proteins. May recruit the E2 ubiquitin-conjugating enzymes to the complex. The chain is Anaphase-promoting complex subunit 11 (ANAPC11) from Bos taurus (Bovine).